Here is a 340-residue protein sequence, read N- to C-terminus: Dihydroorotate dehydrogenase (quinone) (340 aa).

FMN is bound by residues 65 to 69 (AGLDK) and threonine 89. Lysine 69 lines the substrate pocket. 114 to 118 (NRMGF) serves as a coordination point for substrate. Residues asparagine 142 and asparagine 175 each contribute to the FMN site. Asparagine 175 is a binding site for substrate. Residue serine 178 is the Nucleophile of the active site. Asparagine 180 is a binding site for substrate. 2 residues coordinate FMN: lysine 220 and threonine 248. 249–250 (NT) lines the substrate pocket. Residues glycine 271, glycine 300, and 321 to 322 (YT) contribute to the FMN site.

The protein belongs to the dihydroorotate dehydrogenase family. Type 2 subfamily. In terms of assembly, monomer. FMN serves as cofactor.

Its subcellular location is the cell membrane. It catalyses the reaction (S)-dihydroorotate + a quinone = orotate + a quinol. Its pathway is pyrimidine metabolism; UMP biosynthesis via de novo pathway; orotate from (S)-dihydroorotate (quinone route): step 1/1. Functionally, catalyzes the conversion of dihydroorotate to orotate with quinone as electron acceptor. The sequence is that of Dihydroorotate dehydrogenase (quinone) from Paraburkholderia xenovorans (strain LB400).